The following is a 199-amino-acid chain: N-(5'-phosphoribosyl)anthranilate isomerase (199 aa).

It belongs to the TrpF family.

It catalyses the reaction N-(5-phospho-beta-D-ribosyl)anthranilate = 1-(2-carboxyphenylamino)-1-deoxy-D-ribulose 5-phosphate. It participates in amino-acid biosynthesis; L-tryptophan biosynthesis; L-tryptophan from chorismate: step 3/5. In Streptococcus pneumoniae (strain ATCC 700669 / Spain 23F-1), this protein is N-(5'-phosphoribosyl)anthranilate isomerase.